The sequence spans 210 residues: Ribonuclease HII (210 aa).

Residues 18–208 form the RNase H type-2 domain; the sequence is YPVAGIDEAG…VNDIISQTKL (191 aa). Residues aspartate 24, glutamate 25, and aspartate 116 each contribute to the a divalent metal cation site.

This sequence belongs to the RNase HII family. Requires Mn(2+) as cofactor. Mg(2+) is required as a cofactor.

Its subcellular location is the cytoplasm. It carries out the reaction Endonucleolytic cleavage to 5'-phosphomonoester.. Endonuclease that specifically degrades the RNA of RNA-DNA hybrids. This Endomicrobium trichonymphae protein is Ribonuclease HII.